We begin with the raw amino-acid sequence, 499 residues long: MVPVVALVGRPNVGKSTLFNRLTRTRDALVADFPGLTRDRKYGRAEIEGREFICIDTGGIDGNEEGVETRMAEQSLLAIEEADVVLFMVDARAGLMPADTAIAKHLRSRQKPTFLVANKTDGLDADSAVVDFWSLGLGEIHPIAASHGRGVTSLLELVLLPWMDEVVPQRELTEEEENAAYWAELAAKEAKVNGEATADEEDDFNPLDLPIKLAIVGRPNVGKSTLTNRILGEDRVVVFDMPGTTRDSIYIPMERDGREYILIDTAGVRKRGKVTETVEKFSVIKTLQAIEDANVVMLVIDAHEGISDQDLSLLGFILNSGRSLVIVVNKWDGLSQEVRDEVKEALDYRLGFIDFARIHFISALHGSGVGNLFESVTEAYDCSTRRVNTSMLTRIMHMAADDHQPPLVRSRRVKLKYAHAGGYNPPIVVIHGNQVKDLPDSYKRYLMNYFRRSLDIMGTPIRIQFKEGDNPYEGKRNLLTPNQQRKRQRLMSHLKKNKR.

EngA-type G domains follow at residues 3–166 and 211–384; these read PVVA…MDEV and IKLA…DCST. Residues 9 to 16, 56 to 60, 118 to 121, 217 to 224, 264 to 268, and 329 to 332 each bind GTP; these read GRPNVGKS, DTGGI, NKTD, DTAGV, and NKWD. The 85-residue stretch at 385–469 folds into the KH-like domain; it reads RRVNTSMLTR…PIRIQFKEGD (85 aa).

This sequence belongs to the TRAFAC class TrmE-Era-EngA-EngB-Septin-like GTPase superfamily. EngA (Der) GTPase family. In terms of assembly, associates with the 50S ribosomal subunit.

Functionally, GTPase that plays an essential role in the late steps of ribosome biogenesis. This Erwinia tasmaniensis (strain DSM 17950 / CFBP 7177 / CIP 109463 / NCPPB 4357 / Et1/99) protein is GTPase Der.